A 782-amino-acid polypeptide reads, in one-letter code: Translation initiation factor IF-2 (782 aa).

Residues Met-1–Lys-14 show a composition bias toward basic and acidic residues. Disordered stretches follow at residues Met-1–Tyr-106 and Ser-132–Glu-174. Positions Ile-15–Val-25 are enriched in basic residues. The span at Asn-31–Thr-43 shows a compositional bias: polar residues. Residues Asp-44–Arg-61 are compositionally biased toward basic and acidic residues. Composition is skewed to polar residues over residues Gly-86–Tyr-106 and Ile-133–Ser-142. Basic and acidic residues predominate over residues Glu-143–Gln-159. The tr-type G domain occupies Glu-280–Ser-453. The G1 stretch occupies residues Gly-289–Thr-296. Gly-289–Thr-296 is a GTP binding site. Residues Gly-314–His-318 form a G2 region. Residues Asp-335–Gly-338 form a G3 region. GTP is bound by residues Asp-335–His-339 and Asn-389–Asp-392. Residues Asn-389–Asp-392 form a G4 region. The segment at Ser-425–Leu-427 is G5.

It belongs to the TRAFAC class translation factor GTPase superfamily. Classic translation factor GTPase family. IF-2 subfamily.

Its subcellular location is the cytoplasm. Functionally, one of the essential components for the initiation of protein synthesis. Protects formylmethionyl-tRNA from spontaneous hydrolysis and promotes its binding to the 30S ribosomal subunits. Also involved in the hydrolysis of GTP during the formation of the 70S ribosomal complex. This chain is Translation initiation factor IF-2, found in Borreliella afzelii (strain PKo) (Borrelia afzelii).